The sequence spans 286 residues: Protein NipSnap homolog 2 (286 aa).

The transit peptide at 1–23 directs the protein to the mitochondrion; it reads MAARVLRARGAAWAGGLLQRAAP.

This sequence belongs to the NipSnap family. Interacts with CALCOCO2/NDP52, NBR1, SQSTM1/p62, TAX1BP1 and WDFY3/ALFY. Interacts with ATG8 family proteins (MAP1LC3A, MAP1LC3B, MAP1LC3C, GABARAP, GABARAPL1 and GABARAPL2). Interacts with VDAC1. In terms of tissue distribution, widely expressed. Most abundant in heart and skeletal muscle.

It localises to the mitochondrion matrix. Protein involved in mitophagy by facilitating recruitment of the autophagy machinery required for clearance of damaged mitochondria. Accumulates on the mitochondria surface in response to mitochondrial depolarization and acts as a 'eat me' signal by recruiting proteins involved in selective autophagy, such as autophagy receptors (CALCOCO2/NDP52, NBR1, SQSTM1/p62, TAX1BP1 and WDFY3/ALFY) and ATG8 family proteins (MAP1LC3A, MAP1LC3B, MAP1LC3C, GABARAP, GABARAPL1 and GABARAPL2). The protein is Protein NipSnap homolog 2 of Homo sapiens (Human).